A 120-amino-acid chain; its full sequence is Large ribosomal subunit protein uL18 (120 aa).

The protein belongs to the universal ribosomal protein uL18 family. In terms of assembly, part of the 50S ribosomal subunit; part of the 5S rRNA/L5/L18/L25 subcomplex. Contacts the 5S and 23S rRNAs.

Its function is as follows. This is one of the proteins that bind and probably mediate the attachment of the 5S RNA into the large ribosomal subunit, where it forms part of the central protuberance. The polypeptide is Large ribosomal subunit protein uL18 (Hyphomonas neptunium (strain ATCC 15444)).